An 82-amino-acid polypeptide reads, in one-letter code: Cytochrome b559 subunit alpha (82 aa).

Residues 22–36 (VIHAVTLPSIFLAGF) traverse the membrane as a helical segment. Residue His-24 participates in heme binding.

This sequence belongs to the PsbE/PsbF family. In terms of assembly, heterodimer of an alpha subunit and a beta subunit. PSII is composed of 1 copy each of membrane proteins PsbA, PsbB, PsbC, PsbD, PsbE, PsbF, PsbH, PsbI, PsbJ, PsbK, PsbL, PsbM, PsbT, PsbX, PsbY, PsbZ, Psb30/Ycf12, peripheral proteins PsbO, CyanoQ (PsbQ), PsbU, PsbV and a large number of cofactors. It forms dimeric complexes. It depends on heme b as a cofactor.

It localises to the cellular thylakoid membrane. This b-type cytochrome is tightly associated with the reaction center of photosystem II (PSII). PSII is a light-driven water:plastoquinone oxidoreductase that uses light energy to abstract electrons from H(2)O, generating O(2) and a proton gradient subsequently used for ATP formation. It consists of a core antenna complex that captures photons, and an electron transfer chain that converts photonic excitation into a charge separation. This is Cytochrome b559 subunit alpha from Synechococcus sp. (strain CC9605).